Here is a 592-residue protein sequence, read N- to C-terminus: Aspartate--tRNA ligase (592 aa).

Residue glutamate 173 coordinates L-aspartate. Residues 197-200 are aspartate; the sequence is QLFK. Arginine 219 is an L-aspartate binding site. Residues 219-221 and glutamine 228 contribute to the ATP site; that span reads RDE. Histidine 449 lines the L-aspartate pocket. Position 483 (glutamate 483) interacts with ATP. An L-aspartate-binding site is contributed by arginine 490. 535–538 serves as a coordination point for ATP; it reads GLDR.

The protein belongs to the class-II aminoacyl-tRNA synthetase family. Type 1 subfamily. In terms of assembly, homodimer.

The protein localises to the cytoplasm. It catalyses the reaction tRNA(Asp) + L-aspartate + ATP = L-aspartyl-tRNA(Asp) + AMP + diphosphate. Functionally, catalyzes the attachment of L-aspartate to tRNA(Asp) in a two-step reaction: L-aspartate is first activated by ATP to form Asp-AMP and then transferred to the acceptor end of tRNA(Asp). This Shewanella loihica (strain ATCC BAA-1088 / PV-4) protein is Aspartate--tRNA ligase.